Consider the following 988-residue polypeptide: DExH-box ATP-dependent RNA helicase DExH9 (988 aa).

The segment at Met1 to Ser27 is disordered. Residues Ile76–Cys232 enclose the Helicase ATP-binding domain. Ala89–Thr96 is an ATP binding site. A DEVH box motif is present at residues Asp180–His183. One can recognise a Helicase C-terminal domain in the interval Asp307–Arg509.

The protein belongs to the DExH box helicase family. SKI2 subfamily. As to expression, ubiquitous but preferentially expressed in active tissues.

Its subcellular location is the nucleus. It is found in the nucleolus. It carries out the reaction ATP + H2O = ADP + phosphate + H(+). Functionally, ATP-dependent RNA helicase that associates with the RNA exosome complex. Required for proper rRNA biogenesis and development. Involved in the 3'-processing of the 7S pre-RNA to the mature 5.8S rRNA and also in the removal of rRNA maturation by-products. The chain is DExH-box ATP-dependent RNA helicase DExH9 from Arabidopsis thaliana (Mouse-ear cress).